Consider the following 328-residue polypeptide: Deoxynucleotidyltransferase terminal-interacting protein 1 (328 aa).

Disordered regions lie at residues 1-30 (MGAT…GAAG) and 142-176 (ELPG…HVLS). Positions 12–22 (GPGGAERGGLE) are enriched in gly residues. The interval 56–147 (MTTSFTDPAI…RLAHELPGIK (92 aa)) is important for dimerization. A compositionally biased stretch (basic and acidic residues) spans 142 to 158 (ELPGIKRGRQAEEESHR). A DNA-binding region (a.T hook) is located at residues 158–172 (RGSPIPKKRKGRPPG). Position 160 is a phosphoserine (Ser-160). The short motif at 163-169 (PKKRKGR) is the Nuclear localization signal element. The interval 196 to 315 (REGPKWDPAR…MRKYMETLRT (120 aa)) is important for DNA and nucleosome binding. Positions 215–236 (GSRANKALGMGGTRGRIYIKHP) form a DNA-binding region, H-T-H motif.

As to quaternary structure, monomer and homodimer. A minor proportion may form homotrimers. Interacts with ZNF541. Interacts with the terminal deoxynucleotidyltransferase DNTT. Interacts with TRERF1. Identified in a histone deacetylase complex that contains DNTTIP1, HDAC1 and MIDEAS; this complex assembles into a tetramer that contains four copies of each protein chain. Component of a histone deacetylase complex containing DNTTIP1, ZNF541, HDAC1 and HDAC2. Identified in a complex with KCTD19, HDAC1, HDAC2 and ZNF541.

It is found in the nucleus. Increases DNTT terminal deoxynucleotidyltransferase activity (in vitro). Also acts as a transcriptional regulator, binding to the consensus sequence 5'-GNTGCATG-3' following an AT-tract. Associates with RAB20 promoter and positively regulates its transcription. Binds DNA and nucleosomes; may recruit HDAC1 complexes to nucleosomes or naked DNA. The polypeptide is Deoxynucleotidyltransferase terminal-interacting protein 1 (Dnttip1) (Mus musculus (Mouse)).